Reading from the N-terminus, the 175-residue chain is Protein GrpE (175 aa).

Belongs to the GrpE family. Homodimer.

The protein localises to the cytoplasm. In terms of biological role, participates actively in the response to hyperosmotic and heat shock by preventing the aggregation of stress-denatured proteins, in association with DnaK and GrpE. It is the nucleotide exchange factor for DnaK and may function as a thermosensor. Unfolded proteins bind initially to DnaJ; upon interaction with the DnaJ-bound protein, DnaK hydrolyzes its bound ATP, resulting in the formation of a stable complex. GrpE releases ADP from DnaK; ATP binding to DnaK triggers the release of the substrate protein, thus completing the reaction cycle. Several rounds of ATP-dependent interactions between DnaJ, DnaK and GrpE are required for fully efficient folding. This Thermoplasma acidophilum (strain ATCC 25905 / DSM 1728 / JCM 9062 / NBRC 15155 / AMRC-C165) protein is Protein GrpE.